We begin with the raw amino-acid sequence, 326 residues long: MRPPAFWAAGPDHPAARGLGPLGAVYGALAARRMDRPGARAGCPVLCLGNFTLGGAGKTPAALAVAALVAELGAAPAFLSRGYGGRLAGPVRVDPAHHAAAEVGDEPLLLARRAPAVVARDRPAGAALCRSLGADVIVMDDGLQNPSLAKDLSLAVVDGPAGLGNGLPFPAGPLRAPLARQWPHVGGLIVIGNGAGGDAVARAAERRGLPVHGARLVREADDLAGRRCLAFAGIGRPEKFYATLAEAGAVIVGTRPYPDHHPYRARELAALAEAARRLDAELVTTEKDAVRLPRAFAAGVRVLRVRLAFDDAEALRRQIRGALGAP.

52-59 (TLGGAGKT) provides a ligand contact to ATP.

It belongs to the LpxK family.

The enzyme catalyses a lipid A disaccharide + ATP = a lipid IVA + ADP + H(+). Its pathway is glycolipid biosynthesis; lipid IV(A) biosynthesis; lipid IV(A) from (3R)-3-hydroxytetradecanoyl-[acyl-carrier-protein] and UDP-N-acetyl-alpha-D-glucosamine: step 6/6. Functionally, transfers the gamma-phosphate of ATP to the 4'-position of a tetraacyldisaccharide 1-phosphate intermediate (termed DS-1-P) to form tetraacyldisaccharide 1,4'-bis-phosphate (lipid IVA). The polypeptide is Tetraacyldisaccharide 4'-kinase (Methylobacterium radiotolerans (strain ATCC 27329 / DSM 1819 / JCM 2831 / NBRC 15690 / NCIMB 10815 / 0-1)).